Reading from the N-terminus, the 458-residue chain is Preferentially expressed antigen in melanoma-like protein 1 (458 aa).

The stretch at 99-126 (RCKLQVLDLRVMPLKLWNRLPVFGTAGC) is one LRR 1; degenerate repeat. The LRR 2; degenerate repeat unit spans residues 176 to 200 (SLCCCKLQIWAMSMYYHRKLLEILD). The stretch at 201-227 (LDSVQELRMYCISNPVCLLNFAPYLGR) is one LRR 3; degenerate repeat. The LRR 4; degenerate repeat unit spans residues 228–263 (MRNLRCLILSHLWQTFSMTPVEKQQVITQFTSQFLK). LRR repeat units follow at residues 264–289 (LKCL…FWWL), 290–321 (KTPL…SQLK), 322–340 (HLNL…PLRV), 346–373 (ASTL…ALRC), and 374–398 (CTQL…LAYN).

Belongs to the PRAME family. Specifically expressed in testis (at protein level).

The protein resides in the cytoplasm. The protein localises to the cytoplasmic vesicle. It localises to the secretory vesicle. It is found in the acrosome. Its subcellular location is the cell projection. The protein resides in the cilium. The protein localises to the flagellum. Functionally, may play a role in acrosome development and also in sperm maturation and motility. In Mus musculus (Mouse), this protein is Preferentially expressed antigen in melanoma-like protein 1.